The chain runs to 72 residues: UPF0270 protein YheU (72 aa).

Belongs to the UPF0270 family.

This Escherichia fergusonii (strain ATCC 35469 / DSM 13698 / CCUG 18766 / IAM 14443 / JCM 21226 / LMG 7866 / NBRC 102419 / NCTC 12128 / CDC 0568-73) protein is UPF0270 protein YheU.